A 181-amino-acid chain; its full sequence is Large ribosomal subunit protein uL6 (181 aa).

This sequence belongs to the universal ribosomal protein uL6 family. In terms of assembly, part of the 50S ribosomal subunit.

In terms of biological role, this protein binds to the 23S rRNA, and is important in its secondary structure. It is located near the subunit interface in the base of the L7/L12 stalk, and near the tRNA binding site of the peptidyltransferase center. The polypeptide is Large ribosomal subunit protein uL6 (Lawsonia intracellularis (strain PHE/MN1-00)).